The chain runs to 325 residues: tRNA(Ile)-lysidine synthase (325 aa).

34-39 (SGGADS) contributes to the ATP binding site.

It belongs to the tRNA(Ile)-lysidine synthase family.

Its subcellular location is the cytoplasm. The enzyme catalyses cytidine(34) in tRNA(Ile2) + L-lysine + ATP = lysidine(34) in tRNA(Ile2) + AMP + diphosphate + H(+). Ligates lysine onto the cytidine present at position 34 of the AUA codon-specific tRNA(Ile) that contains the anticodon CAU, in an ATP-dependent manner. Cytidine is converted to lysidine, thus changing the amino acid specificity of the tRNA from methionine to isoleucine. In Rhodococcus jostii (strain RHA1), this protein is tRNA(Ile)-lysidine synthase.